The sequence spans 305 residues: Peroxisome biogenesis factor 2 (305 aa).

Topologically, residues 1-15 are peroxisomal matrix; it reads MAAREESTQSANRVL. The helical transmembrane segment at 16–42 threads the bilayer; sequence RISQLDALELNKALEQLVWSQFTQCFH. Over 43 to 48 the chain is Cytoplasmic; it reads GFKPGL. Residues 49–74 form a helical membrane-spanning segment; sequence LARFEPEVKAFLWLFLWRFTIYSKNA. The Peroxisomal matrix segment spans residues 75 to 98; it reads TVGQSVLNIQHKNDSSPNPVYQPP. The helical transmembrane segment at 99 to 125 threads the bilayer; the sequence is SKNQKLLYAVCTIGGRWLEERCYDLFR. Over 126–133 the chain is Cytoplasmic; it reads NRHLASFG. The helical transmembrane segment at 134–160 threads the bilayer; that stretch reads KAKQCMNFVVGLLKLGELMNFLIFLQK. Topologically, residues 161–187 are peroxisomal matrix; sequence GKFATLTERLLGIHSVFCKPQNMREVG. The helical transmembrane segment at 188-211 threads the bilayer; the sequence is FEYMNRELLWHGFAEFLIFLLPLI. The Cytoplasmic segment spans residues 212-305; sequence NIQKLKAKLS…GIQMSEVNAL (94 aa). Zn(2+) is bound by residues cysteine 244, cysteine 247, cysteine 259, histidine 261, cysteine 264, cysteine 267, cysteine 280, and cysteine 283. An RING-type zinc finger spans residues 244-284; that stretch reads CALCGEWPTMPHTIGCEHVFCYYCVKSSFLFDIYFTCPKCG.

The protein belongs to the pex2/pex10/pex12 family. In terms of assembly, component of the PEX2-PEX10-PEX12 retrotranslocation channel, composed of PEX2, PEX10 and PEX12. In terms of processing, forms intramolecular and intermolecular disulfide bonds in response to reactive oxygen species (ROS), promoting higher stability.

Its subcellular location is the peroxisome membrane. The catalysed reaction is [E2 ubiquitin-conjugating enzyme]-S-ubiquitinyl-L-cysteine + [acceptor protein]-L-cysteine = [E2 ubiquitin-conjugating enzyme]-L-cysteine + [acceptor protein]-S-ubiquitinyl-L-cysteine.. It carries out the reaction S-ubiquitinyl-[E2 ubiquitin-conjugating enzyme]-L-cysteine + [acceptor protein]-L-lysine = [E2 ubiquitin-conjugating enzyme]-L-cysteine + N(6)-ubiquitinyl-[acceptor protein]-L-lysine.. It participates in protein modification; protein ubiquitination. Functionally, E3 ubiquitin-protein ligase component of a retrotranslocation channel required for peroxisome organization by mediating export of the PEX5 receptor from peroxisomes to the cytosol, thereby promoting PEX5 recycling. The retrotranslocation channel is composed of PEX2, PEX10 and PEX12; each subunit contributing transmembrane segments that coassemble into an open channel that specifically allows the passage of PEX5 through the peroxisomal membrane. PEX2 also regulates peroxisome organization by acting as a E3 ubiquitin-protein ligase. PEX2 ubiquitinates PEX5 during its passage through the retrotranslocation channel: catalyzes monoubiquitination of PEX5 at 'Cys-11', a modification that acts as a signal for PEX5 extraction into the cytosol. Required for pexophagy in response to starvation by mediating ubiquitination of peroxisomal proteins, such as PEX5 and ABCD3/PMP70. Also involved in the response to reactive oxygen species (ROS) by mediating 'Lys-48'-linked polyubiquitination and subsequent degradation of PNPLA2/ATGL, thereby regulating lipolysis. The chain is Peroxisome biogenesis factor 2 from Mus musculus (Mouse).